Reading from the N-terminus, the 203-residue chain is Protein GrpE (203 aa).

Over residues 1 to 10 the composition is skewed to basic and acidic residues; sequence MSNESIKAEQ. The tract at residues 1 to 20 is disordered; it reads MSNESIKAEQDLIQEGVESE.

This sequence belongs to the GrpE family. In terms of assembly, homodimer.

It is found in the cytoplasm. Participates actively in the response to hyperosmotic and heat shock by preventing the aggregation of stress-denatured proteins, in association with DnaK and GrpE. It is the nucleotide exchange factor for DnaK and may function as a thermosensor. Unfolded proteins bind initially to DnaJ; upon interaction with the DnaJ-bound protein, DnaK hydrolyzes its bound ATP, resulting in the formation of a stable complex. GrpE releases ADP from DnaK; ATP binding to DnaK triggers the release of the substrate protein, thus completing the reaction cycle. Several rounds of ATP-dependent interactions between DnaJ, DnaK and GrpE are required for fully efficient folding. In Shewanella sp. (strain MR-4), this protein is Protein GrpE.